The following is a 670-amino-acid chain: MRRLTISGLLISLAKLCAGMEINVPSSSDVWTSGHIEPLEWSVVSTDPLQANVWLINEVEYPPTSRYIMTINTFDENATFPALDLSPGYGYQISFTSIRDDSVIYAQSGTFYIVGGEGISSTTGSTFQSMTTFTSSQTNSGHASASTSIPSTAITVTANSTIYSSATSSFPYSTDVSVSTGTSTDIVTLPPPASSTSSFSTITNTSMIPSSSSFTTTTGSPYYNTSSFLPSSVISSASLSSSSVLPTSIITSTSTPVTVSSSSLSSFTPSYSTNLTTTGSTTTTGSATVSSSPFYSNSSVIPTSVPSSVSSFTSSSSSYTTTLTASNTSVTYTGTGTGSATFTSSPPFYSNSSVIPTSVPSSVSSFTSSNSSYTTTLTASNTSITYTGTGTGSATFTSSPPFYSNSSVIPTSVPSSVSSFTSSNSSYTTTLTASNTTVTFTGTGTGSATFTSSPPFYSNSSVIPTSAPSSVSSFTSSNSSYTTTLTASNTTVTFTGTGTGSATATSSSPYYSNSSIIVPTTVSTSGSVSSFSSSPSPTSSFSGTSALSSSSNEETTTTTQVTYTTSPEETTTTMTTTTCSSRPEETISTVSTTSTVSESGSSSASITSTYPSSTLSMTTSHLSSSSVHSSSAHSSSSRSSSMSLPPSAGSSTSLQRISLLCVFIPLLFLF.

The first 19 residues, 1–19, serve as a signal peptide directing secretion; sequence MRRLTISGLLISLAKLCAG. N-linked (GlcNAc...) asparagine glycosylation is found at Asn77, Asn159, Asn204, Asn224, Asn274, Asn297, Asn327, Asn351, Asn370, Asn381, Asn405, Asn424, Asn435, Asn459, Asn478, Asn489, and Asn513. The disordered stretch occupies residues 526–651; the sequence is GSVSSFSSSP…MSLPPSAGSS (126 aa).

The protein resides in the secreted. The protein localises to the endoplasmic reticulum. This is Serine/threonine-rich protein adg2 (adg2) from Schizosaccharomyces pombe (strain 972 / ATCC 24843) (Fission yeast).